We begin with the raw amino-acid sequence, 465 residues long: Fumarate hydratase class II (465 aa).

Residues 99 to 101 (SGT), Arg-127, 130 to 133 (HPND), 140 to 142 (STN), and Thr-188 contribute to the substrate site. The active-site Proton donor/acceptor is the His-189. Residue Ser-319 is part of the active site. Residues Ser-320 and 325–327 (KVN) contribute to the substrate site.

This sequence belongs to the class-II fumarase/aspartase family. Fumarase subfamily. In terms of assembly, homotetramer.

It localises to the cytoplasm. The enzyme catalyses (S)-malate = fumarate + H2O. It participates in carbohydrate metabolism; tricarboxylic acid cycle; (S)-malate from fumarate: step 1/1. Its function is as follows. Involved in the TCA cycle. Catalyzes the stereospecific interconversion of fumarate to L-malate. This Parasynechococcus marenigrum (strain WH8102) protein is Fumarate hydratase class II.